Reading from the N-terminus, the 894-residue chain is Protein translocase subunit SecA (894 aa).

ATP-binding positions include Q87, 105–109 (GEGKT), and D512. The tract at residues 857-894 (FNLGDEPEAQQPVTSKKVGRNEPCPCGSGKKYKQCCGK) is disordered. Zn(2+)-binding residues include C880, C882, C891, and C892.

Belongs to the SecA family. As to quaternary structure, monomer and homodimer. Part of the essential Sec protein translocation apparatus which comprises SecA, SecYEG and auxiliary proteins SecDF-YajC and YidC. Zn(2+) serves as cofactor.

It localises to the cell inner membrane. The protein localises to the cytoplasm. The enzyme catalyses ATP + H2O + cellular proteinSide 1 = ADP + phosphate + cellular proteinSide 2.. In terms of biological role, part of the Sec protein translocase complex. Interacts with the SecYEG preprotein conducting channel. Has a central role in coupling the hydrolysis of ATP to the transfer of proteins into and across the cell membrane, serving as an ATP-driven molecular motor driving the stepwise translocation of polypeptide chains across the membrane. This Geotalea uraniireducens (strain Rf4) (Geobacter uraniireducens) protein is Protein translocase subunit SecA.